The following is a 464-amino-acid chain: Type I restriction enzyme EcoKI specificity subunit (464 aa).

It belongs to the type-I restriction system S methylase family. As to quaternary structure, the type I restriction/modification system is composed of three polypeptides R, M and S. The restriction enzyme has stoichiometry R(2)M(2)S(1). The methyltransferase is composed of M(2)S(1). (Microbial infection) Interacts with Escherichia phage T7 protein Ocr; this interaction leads to the inhibition of the methyltransferase restriction enzyme M.EcoKI composed of M(2)S(1).

In terms of biological role, the specificity (S) subunit of a type I restriction enzyme; this subunit dictates DNA sequence specificity. The M and S subunits together form a methyltransferase (MTase) that methylates A-2 on the top and A-3 on the bottom strand of the sequence 5'-AACN(6)GTGC-3'. In the presence of the R subunit the complex can also act as an endonuclease, binding to the same target sequence but cutting the DNA some distance from this site. Whether the DNA is cut or modified depends on the methylation state of the target sequence. When the target site is unmodified, the DNA is cut. When the target site is hemimethylated, the complex acts as a maintenance MTase modifying the DNA so that both strands become methylated. After locating a non-methylated recognition site, the enzyme complex serves as a molecular motor that translocates DNA in an ATP-dependent manner until a collision occurs that triggers cleavage. This is Type I restriction enzyme EcoKI specificity subunit from Escherichia coli (strain K12).